Here is a 440-residue protein sequence, read N- to C-terminus: Enolase (440 aa).

Position 163 (glutamine 163) interacts with (2R)-2-phosphoglycerate. Glutamate 205 functions as the Proton donor in the catalytic mechanism. Residues aspartate 242, glutamate 288, and aspartate 315 each coordinate Mg(2+). The (2R)-2-phosphoglycerate site is built by lysine 340, arginine 369, serine 370, and lysine 391. Lysine 340 (proton acceptor) is an active-site residue.

It belongs to the enolase family. Mg(2+) is required as a cofactor.

The protein resides in the cytoplasm. It is found in the secreted. The protein localises to the cell surface. It carries out the reaction (2R)-2-phosphoglycerate = phosphoenolpyruvate + H2O. Its pathway is carbohydrate degradation; glycolysis; pyruvate from D-glyceraldehyde 3-phosphate: step 4/5. Functionally, catalyzes the reversible conversion of 2-phosphoglycerate (2-PG) into phosphoenolpyruvate (PEP). It is essential for the degradation of carbohydrates via glycolysis. In Pediococcus pentosaceus (strain ATCC 25745 / CCUG 21536 / LMG 10740 / 183-1w), this protein is Enolase.